A 355-amino-acid chain; its full sequence is Uroporphyrinogen decarboxylase (355 aa).

Substrate contacts are provided by residues 27-31, Asp77, Tyr154, Thr209, and His327; that span reads RQAGR.

It belongs to the uroporphyrinogen decarboxylase family. In terms of assembly, homodimer.

It is found in the cytoplasm. It catalyses the reaction uroporphyrinogen III + 4 H(+) = coproporphyrinogen III + 4 CO2. It functions in the pathway porphyrin-containing compound metabolism; protoporphyrin-IX biosynthesis; coproporphyrinogen-III from 5-aminolevulinate: step 4/4. Catalyzes the decarboxylation of four acetate groups of uroporphyrinogen-III to yield coproporphyrinogen-III. In Tolumonas auensis (strain DSM 9187 / NBRC 110442 / TA 4), this protein is Uroporphyrinogen decarboxylase.